A 214-amino-acid polypeptide reads, in one-letter code: Probable transaldolase (214 aa).

Residue Lys83 is the Schiff-base intermediate with substrate of the active site.

This sequence belongs to the transaldolase family. Type 3B subfamily.

The protein resides in the cytoplasm. It catalyses the reaction D-sedoheptulose 7-phosphate + D-glyceraldehyde 3-phosphate = D-erythrose 4-phosphate + beta-D-fructose 6-phosphate. Its pathway is carbohydrate degradation; pentose phosphate pathway; D-glyceraldehyde 3-phosphate and beta-D-fructose 6-phosphate from D-ribose 5-phosphate and D-xylulose 5-phosphate (non-oxidative stage): step 2/3. In terms of biological role, transaldolase is important for the balance of metabolites in the pentose-phosphate pathway. This Streptococcus equi subsp. equi (strain 4047) protein is Probable transaldolase.